The sequence spans 185 residues: Homeobox expressed in ES cells 1 (185 aa).

The segment at residues 108 to 167 is a DNA-binding region (homeobox); the sequence is GRRPRTAFTQNQIEVLENVFRVNCYPGIDIREDLAQKLNLEEDRIQIWFQNRRAKLKRSH.

The protein belongs to the ANF homeobox family. Can form heterodimers with PROP1 in binding to DNA. Interacts with TLE1.

Its subcellular location is the nucleus. In terms of biological role, required for the normal development of the forebrain, eyes and other anterior structures such as the olfactory placodes and pituitary gland. Possible transcriptional repressor. Binds to the palindromic PIII sequence, 5'-AGCTTGAGTCTAATTGAATTAACTGTAC-3'. HESX1 and PROP1 bind as heterodimers on this palindromic site, and, in vitro, HESX1 can antagonize PROP1 activation. This Pan paniscus (Pygmy chimpanzee) protein is Homeobox expressed in ES cells 1 (HESX1).